A 421-amino-acid chain; its full sequence is Histidine--tRNA ligase (421 aa).

It belongs to the class-II aminoacyl-tRNA synthetase family. As to quaternary structure, homodimer.

It localises to the cytoplasm. It catalyses the reaction tRNA(His) + L-histidine + ATP = L-histidyl-tRNA(His) + AMP + diphosphate + H(+). In Francisella tularensis subsp. holarctica (strain FTNF002-00 / FTA), this protein is Histidine--tRNA ligase.